Here is a 975-residue protein sequence, read N- to C-terminus: Translation initiation factor IF-2 (975 aa).

Disordered stretches follow at residues 49–110 and 193–339; these read KLSG…APKA and AAAP…GRGA. Basic residues predominate over residues 63–72; it reads KKTAARKAAP. 3 stretches are compositionally biased toward low complexity: residues 73–94, 193–202, and 209–225; these read KKAA…AKTP, AAAPEAPAPQ, and VVGT…ASAP. Residues 308-318 are compositionally biased toward basic and acidic residues; sequence GADRGGRDFDK. Residues 324 to 336 are compositionally biased toward low complexity; that stretch reads GPSAPAAGPAAAG. Positions 469–639 constitute a tr-type G domain; that stretch reads TRPPVVTVMG…KLVAEVAELK (171 aa). Residues 478–485 are G1; the sequence is GHVDHGKT. Residue 478–485 participates in GTP binding; the sequence is GHVDHGKT. Residues 503–507 form a G2 region; that stretch reads GITQH. A G3 region spans residues 525–528; sequence DTPG. GTP-binding positions include 525 to 529 and 579 to 582; these read DTPGH and NKID. The G4 stretch occupies residues 579-582; the sequence is NKID. The tract at residues 615 to 617 is G5; that stretch reads SAL.

Belongs to the TRAFAC class translation factor GTPase superfamily. Classic translation factor GTPase family. IF-2 subfamily.

It localises to the cytoplasm. One of the essential components for the initiation of protein synthesis. Protects formylmethionyl-tRNA from spontaneous hydrolysis and promotes its binding to the 30S ribosomal subunits. Also involved in the hydrolysis of GTP during the formation of the 70S ribosomal complex. This is Translation initiation factor IF-2 from Bdellovibrio bacteriovorus (strain ATCC 15356 / DSM 50701 / NCIMB 9529 / HD100).